The primary structure comprises 515 residues: Protein translocase subunit SecD (515 aa).

6 helical membrane passes run Leu-5–Pro-25, Lys-353–Tyr-373, Leu-375–Leu-395, Phe-398–Val-418, Phe-450–Phe-470, and Gly-477–Thr-497.

This sequence belongs to the SecD/SecF family. SecD subfamily. Forms a complex with SecF. Part of the essential Sec protein translocation apparatus which comprises SecA, SecYEG and auxiliary proteins SecDF. Other proteins may also be involved.

The protein resides in the cell inner membrane. Its function is as follows. Part of the Sec protein translocase complex. Interacts with the SecYEG preprotein conducting channel. SecDF uses the proton motive force (PMF) to complete protein translocation after the ATP-dependent function of SecA. This Desulfurispirillum indicum (strain ATCC BAA-1389 / DSM 22839 / S5) protein is Protein translocase subunit SecD.